The following is a 1196-amino-acid chain: MSKKSVEIEDVNNTYDQEAHFALLDLFFEKDKQVLVKHHIDSFNQFIEEIIPNILQGGDNVISEKATENKIIRYRLTFNDLGIKPPTLENEENLLYPLDAIRKQISYSAKYTATVTQWQDIVDIDTKKTETRIIGSPEKDVPIAKIPIMVLSKYCNLTLRPDIAGKHCKYDAGGYFIVNGSEKVVLSVESMIPRKPVVFTQRDQNSLLYYVRVQSIPASQFVGNPQLFTVKMKRDNSIILSIPHFKEVSIFTFIRALGIETDEDIVDSILDVKKEKDLLNLLSICMNSSNTPSVTKEEALEIMANQIKSTKTFTDTNPEVKAEQRRRYLDKIMTQFVLPHITSGTGDPEIDKIYKAHYICYMIHKLLKCYLRGAREVEEYRGCDDRDSMVNKRIDLTGRLLGGLFKQFYDKMLNDCNKIFRTKNIDDKKPPNIIPHIKPNSIEQGLRQALSTGNFGSQSRKGLSQMLNRMNHLHSLSYMRRVITPTVDASTMKMTSPRHLHNTQYGSMCPLESPEGKPKTGLVKNMAMMEGITINMNSQIPIIESYLIGKITTLESANKKRLHQYVKVFLNGNWLGVTRNIIKIHNDLRAMRFRGELSRMVGLVLNYKTAEFHIYTDGGRLIRPYLTVTDNKLNFKPEMLDEVNSWEEFLAKFPEVIEYVDKEEEQNIMLAVFPQYIQDANRIMSKKPINSRDQLNKINRTNRYDDNVYVRYTHCEIHPCMILGLISSNIPFPDHNQSPRGIFQYNQARQAMGLYISDYRERTDISYILYHPQIPLVTSRASKYTGTHIFPAGENSIVAIASYTGLMNQEDSLVINDSAIQKGYMRAQALKKYMEIIKKNPASSQTSIFMKPDRNKVDNLRDANYDKLSEEGYAKVETVIRDGDVVIGVVNPKPTAREDEKQYKDASSIYKSLIPGAVDKVITEVNNDGYPIIKMRIRSERIPNVGDKFSSRAGQKGTIGYKAHRADMLFSKSGLIPDIIINPNCMPKRMTIGQLIECLLGKLCAVKGVYGDATPFTSVDLNAINDELVAAGYEEWGNETMYNGMNGKKLPVKIFIGPTYYQRLKQMVGDKAHSRARGPTQLLTRQAPEGRSRDGGLRIGFEMERDALCAHGVAQFLKEKTVDNSDIYTCHVCDSCGQFAHKVPEKKYYTCTGCRNTTSISKIVIPYAFKLLLQELASINILGKIRTSKTIATPRG.

Residues Ser1074–Gly1095 form a disordered region. The segment at Cys1133 to Cys1154 adopts a C4-type zinc-finger fold.

It belongs to the RNA polymerase beta chain family.

Its subcellular location is the virion. The catalysed reaction is RNA(n) + a ribonucleoside 5'-triphosphate = RNA(n+1) + diphosphate. Its function is as follows. DNA-dependent RNA polymerase catalyzes the transcription of DNA into RNA using the four ribonucleoside triphosphates as substrates. The polypeptide is DNA-directed RNA polymerase subunit 2 (RPO2) (Acanthamoeba polyphaga mimivirus (APMV)).